We begin with the raw amino-acid sequence, 780 residues long: Molybdenum cofactor sulfurase (780 aa).

The residue at position 246 (lysine 246) is an N6-(pyridoxal phosphate)lysine. Residue cysteine 413 is part of the active site. Positions 635-780 (LRLLRQSGQR…MTCGDVVLVE (146 aa)) constitute an MOSC domain. Serine 734 bears the Phosphoserine mark.

Belongs to the class-V pyridoxal-phosphate-dependent aminotransferase family. MOCOS subfamily. Pyridoxal 5'-phosphate serves as cofactor.

It catalyses the reaction Mo-molybdopterin + L-cysteine + AH2 = thio-Mo-molybdopterin + L-alanine + A + H2O. Functionally, sulfurates the molybdenum cofactor. Sulfation of molybdenum is essential for xanthine dehydrogenase (XDH) and aldehyde oxidase (ADO) enzymes in which molybdenum cofactor is liganded by 1 oxygen and 1 sulfur atom in active form. The polypeptide is Molybdenum cofactor sulfurase (Drosophila yakuba (Fruit fly)).